An 836-amino-acid chain; its full sequence is General vesicular transport factor p115 (836 aa).

The tract at residues M1 to S22 is disordered. The segment covering L12 to S22 has biased composition (polar residues). ARM repeat units lie at residues A24 to Q64, G65 to P124, H126 to V166, M169 to E210, N211 to G256, R316 to V359, P368 to L413, S424 to L463, T477 to L518, T523 to R577, and G579 to G636. 2 coiled-coil regions span residues I663–T707 and N744–G806. The interval E803 to R836 is disordered. The span at G806–V816 shows a compositional bias: polar residues. Positions A817–R836 are enriched in low complexity.

This sequence belongs to the VDP/USO1/EDE1 family.

It localises to the cytoplasm. The protein resides in the golgi apparatus. Its subcellular location is the golgi stack. It is found in the golgi stack membrane. The protein localises to the endoplasmic reticulum. It localises to the endoplasmic reticulum membrane. Functionally, essential for maintaining the architecture of the Golgi stacks and for normal organization of the transitional endoplasmic reticulum (tER). Required for both the formation of the Golgi stacks and the maintenance of the individual cisternae. In Drosophila melanogaster (Fruit fly), this protein is General vesicular transport factor p115.